The sequence spans 376 residues: Zinc transporter 7 (376 aa).

Residues 1–37 are Cytoplasmic-facing; the sequence is MLPLSIKDDEYKPPKFNLFGKISGWFRSILSDKTSRN. A helical membrane pass occupies residues 38–58; that stretch reads LFFFLCLNLSFAFVELLYGIW. The Lumenal portion of the chain corresponds to 59–67; sequence SNCLGLISD. A helical transmembrane segment spans residues 68–88; sequence SFHMFFDSTAILAGLAASVIS. Over 89 to 102 the chain is Cytoplasmic; that stretch reads KWRDNDAFSYGYVR. A helical membrane pass occupies residues 103-123; that stretch reads AEVLAGFVNGLFLIFTAFFIF. The Lumenal portion of the chain corresponds to 124 to 140; it reads SEGVERALAPPDVHHER. A helical transmembrane segment spans residues 141-161; that stretch reads LLLVSILGFVVNLIGIFVFKH. Residues 161 to 218 are his-rich loop; it reads HGGHGHSHGSGHGHSHSLFNGALDQAHGHVDHCHSHEVKHGAAHSHDHAHGHGHFHSH. Topologically, residues 162–236 are cytoplasmic; that stretch reads GGHGHSHGSG…TGPSRQILQG (75 aa). Residues 194-222 are compositionally biased toward basic and acidic residues; sequence HSHEVKHGAAHSHDHAHGHGHFHSHDGPS. A disordered region spans residues 194-226; that stretch reads HSHEVKHGAAHSHDHAHGHGHFHSHDGPSLKET. A helical transmembrane segment spans residues 237–257; the sequence is VFLHILADTLGSIGVIASAIM. The Lumenal segment spans residues 258 to 262; sequence MQNFG. Residues 263-283 traverse the membrane as a helical segment; it reads LMIADPICSILIAILIVVSVI. The Cytoplasmic segment spans residues 284 to 376; sequence PLLRESVGIL…LYVQIDFAAM (93 aa).

The protein belongs to the cation diffusion facilitator (CDF) transporter (TC 2.A.4) family. SLC30A subfamily. As to quaternary structure, homooligomer. Highly expressed in megakaryocytes and other bone marrow cells and in the epithelium of the small intestine. Expressed in testis (in Leydig cells), adrenal gland (in adrenal medula, zona fasciculata and zona of reticularis), and pituitary gland (in somatotropic cells).

The protein resides in the golgi apparatus membrane. It is found in the cytoplasmic vesicle. The protein localises to the golgi apparatus. Its subcellular location is the trans-Golgi network. It localises to the sarcoplasmic reticulum. The protein resides in the mitochondrion. The enzyme catalyses Zn(2+)(in) = Zn(2+)(out). In terms of biological role, zinc ion transporter mediating zinc entry from the cytosol into the lumen of organelles along the secretory pathway. By contributing to zinc ion homeostasis within the early secretory pathway, regulates the activation and folding of enzymes like alkaline phosphatases. In Homo sapiens (Human), this protein is Zinc transporter 7.